A 165-amino-acid chain; its full sequence is Nucleotide-binding protein PMN2A_1813 (165 aa).

Belongs to the YajQ family.

Functionally, nucleotide-binding protein. This is Nucleotide-binding protein PMN2A_1813 from Prochlorococcus marinus (strain NATL2A).